Here is a 1183-residue protein sequence, read N- to C-terminus: DNA-directed RNA polymerase subunit beta (1183 aa).

Positions 1149–1162 (DNEIEMADVDDEDA) are enriched in acidic residues. The tract at residues 1149-1183 (DNEIEMADVDDEDATERKVDLQQKDVPETQKETTD) is disordered. The span at 1163-1183 (TERKVDLQQKDVPETQKETTD) shows a compositional bias: basic and acidic residues.

This sequence belongs to the RNA polymerase beta chain family. The RNAP catalytic core consists of 2 alpha, 1 beta, 1 beta' and 1 omega subunit. When a sigma factor is associated with the core the holoenzyme is formed, which can initiate transcription.

It carries out the reaction RNA(n) + a ribonucleoside 5'-triphosphate = RNA(n+1) + diphosphate. Its function is as follows. DNA-dependent RNA polymerase catalyzes the transcription of DNA into RNA using the four ribonucleoside triphosphates as substrates. The sequence is that of DNA-directed RNA polymerase subunit beta from Staphylococcus haemolyticus (strain JCSC1435).